A 300-amino-acid polypeptide reads, in one-letter code: NAD kinase (300 aa).

Asp80 serves as the catalytic Proton acceptor. NAD(+)-binding positions include 80 to 81, 154 to 155, Arg165, Arg182, Asp184, 195 to 200, and Gln253; these read DG, ND, and TAYALS.

It belongs to the NAD kinase family. Requires a divalent metal cation as cofactor.

Its subcellular location is the cytoplasm. It catalyses the reaction NAD(+) + ATP = ADP + NADP(+) + H(+). Functionally, involved in the regulation of the intracellular balance of NAD and NADP, and is a key enzyme in the biosynthesis of NADP. Catalyzes specifically the phosphorylation on 2'-hydroxyl of the adenosine moiety of NAD to yield NADP. The chain is NAD kinase from Aromatoleum aromaticum (strain DSM 19018 / LMG 30748 / EbN1) (Azoarcus sp. (strain EbN1)).